A 226-amino-acid chain; its full sequence is 7-cyano-7-deazaguanine synthase (226 aa).

Position 8 to 18 (8 to 18 (LSGGLDSTTTL)) interacts with ATP. Cys188, Cys198, Cys201, and Cys204 together coordinate Zn(2+).

This sequence belongs to the QueC family. Zn(2+) serves as cofactor.

It catalyses the reaction 7-carboxy-7-deazaguanine + NH4(+) + ATP = 7-cyano-7-deazaguanine + ADP + phosphate + H2O + H(+). It participates in purine metabolism; 7-cyano-7-deazaguanine biosynthesis. Its function is as follows. Catalyzes the ATP-dependent conversion of 7-carboxy-7-deazaguanine (CDG) to 7-cyano-7-deazaguanine (preQ(0)). The protein is 7-cyano-7-deazaguanine synthase of Nitrosomonas eutropha (strain DSM 101675 / C91 / Nm57).